A 480-amino-acid polypeptide reads, in one-letter code: RAC-alpha serine/threonine-protein kinase (480 aa).

The PH domain occupies 5-108; sequence AIVKEGWLHK…WTTAIQTVAD (104 aa). Lysine 14 and lysine 20 each carry N6-acetyllysine. 14–19 contacts 1D-myo-inositol 1,3,4,5-tetrakisphosphate; the sequence is KRGEYI. Residues 23-25 and asparagine 53 contribute to the 1D-myo-inositol 1,3,4,5-tetrakisphosphate site; that span reads RPR. A disulfide bridge connects residues cysteine 60 and cysteine 77. Residue arginine 86 coordinates 1D-myo-inositol 1,3,4,5-tetrakisphosphate. Serine 124 carries the post-translational modification Phosphoserine. A Phosphoserine; alternate modification is found at serine 129. Serine 129 carries an O-linked (GlcNAc) serine; alternate glycan. In terms of domain architecture, Protein kinase spans 150-408; the sequence is FEYLKLLGKG…AKEIMQHRFF (259 aa). 156 to 164 lines the ATP pocket; it reads LGKGTFGKV. Tyrosine 176 bears the Phosphotyrosine; by TNK2 mark. Lysine 179 is an ATP binding site. The Proton acceptor role is filled by aspartate 274. Lysine 284 participates in a covalent cross-link: Glycyl lysine isopeptide (Lys-Gly) (interchain with G-Cter in ubiquitin). Residues cysteine 296 and cysteine 310 are joined by a disulfide bond. Residue threonine 305 is glycosylated (O-linked (GlcNAc) threonine). At threonine 308 the chain carries Phosphothreonine; by PDPK1. An O-linked (GlcNAc) threonine glycan is attached at threonine 312. The AGC-kinase C-terminal domain occupies 409–480; it reads ASIVWQDVYE…QFSYSASATA (72 aa). A Phosphothreonine modification is found at threonine 448. Threonine 450 is subject to Phosphothreonine; by MTOR. The interval 450 to 480 is disordered; that stretch reads TPPDQDDSMEGVDSERRPHFPQFSYSASATA. O-linked (GlcNAc) serine; alternate glycosylation occurs at serine 473. Serine 473 is modified (phosphoserine; by MTOR; alternate). At tyrosine 474 the chain carries Phosphotyrosine. Serine 477 carries the phosphoserine modification. Threonine 479 is subject to Phosphothreonine.

This sequence belongs to the protein kinase superfamily. AGC Ser/Thr protein kinase family. RAC subfamily. As to quaternary structure, interacts (via the C-terminus) with CCDC88A (via its C-terminus) and THEM4 (via its C-terminus). Interacts with AKTIP. Interacts (via PH domain) with MTCP1, TCL1A and TCL1B. Interacts with TRAF6. Interacts with GRB10; the interaction leads to GRB10 phosphorylation thus promoting YWHAE binding. Interacts with RARA; the interaction phosphorylates RARA and represses its transactivation activity. Interacts with MAP3K5 and TNK2. Interacts with BAD, CLK2, PPP2R5B, STK3 and STK4. Interacts (via PH domain) with SIRT1. Interacts with SRPK2 in a phosphorylation-dependent manner. Interacts with RAF1. Interacts with PKN2 (via C-terminal domain); the interaction occurs with the C-terminus cleavage products of PKN2 in apoptotic cells. Interacts with TRIM13; the interaction ubiquitinates AKT1 leading to its proteasomal degradation. Interacts with and phosphorylated by PDPK1. Interacts with BTBD10. Interacts with KCTD20. Interacts with PA2G4. Interacts with PA2G4. Interacts with KIF14; the interaction is detected in the plasma membrane upon INS stimulation and promotes AKT1 phosphorylation. Interacts with FAM83B; activates the PI3K/AKT signaling cascade. Interacts with WDFY2 (via WD repeats 1-3). Forms a complex with WDFY2 and FOXO1. Interacts with FAM168A. Interacts with SYAP1 (via phosphorylated form and BSD domain); this interaction is enhanced in a mTORC2-mediated manner in response to epidermal growth factor (EGF) stimulation and activates AKT1. Interacts with PKHM3. Interacts with FKBP5/FKBP51; promoting interaction between Akt/AKT1 and PHLPP1, thereby enhancing dephosphorylation and subsequent activation of Akt/AKT1. Interacts with TMEM175; leading to formation of the lysoK(GF) complex. Post-translationally, O-GlcNAcylation at Thr-305 and Thr-312 inhibits activating phosphorylation at Thr-308 via disrupting the interaction between AKT1 and PDPK1. O-GlcNAcylation at Ser-473 also probably interferes with phosphorylation at this site. Phosphorylation on Thr-308, Ser-473 and Tyr-474 is required for full activity. Phosphorylation of the activation loop at Thr-308 by PDPK1/PDK1 is a prerequisite for full activation. Phosphorylation by mTORC2 in response to growth factors plays a key role in AKT1 activation: mTORC2 phosphorylates different sites depending on the context, such as Thr-450, Ser-473, Ser-477 or Thr-479, thereby facilitating subsequent phosphorylation of the activation loop by PDPK1/PDK1. Phosphorylation at Ser-473 by mTORC2 promotes ubiquitination and degradation by the proteasome. Also phosphorylated at Ser-477 and Thr-479 by CDK2, facilitating subsequent phosphorylation of the activation loop by PDPK1/PDK1. Activated TNK2 phosphorylates it on Tyr-176 resulting in its binding to the anionic plasma membrane phospholipid PA. This phosphorylated form localizes to the cell membrane, where it is targeted by PDPK1 and PDPK2 for further phosphorylations on Thr-308 and Ser-473 leading to its activation. Phosphorylated at Thr-308 and Ser-473 by IKBKE and TBK1. Ser-473 phosphorylation is enhanced by interaction with AGAP2 isoform 2 (PIKE-A). Ser-473 phosphorylation is enhanced by signaling through activated FLT3. Ser-473 is dephosphorylated by PHLPP. Dephosphorylated at Thr-308 and Ser-473 by PP2A phosphatase. The phosphorylated form of PPP2R5B is required for bridging AKT1 with PP2A phosphatase. Ser-473 is dephosphorylated by CPPED1, leading to termination of signaling. AIM2 acts as an inhibitor of AKT1 by inhibiting phosphorylation Ser-473: AIM2 acts both by inhibiting the activity of PRKDC/DNA-PK kinase and promoting dephosphorylation by PP2A phosphatase. In terms of processing, ubiquitinated; undergoes both 'Lys-48'- and 'Lys-63'-linked polyubiquitination. TRAF6-induced 'Lys-63'-linked AKT1 ubiquitination is critical for phosphorylation and activation. When ubiquitinated, it translocates to the plasma membrane, where it becomes phosphorylated. When fully phosphorylated and translocated into the nucleus, undergoes 'Lys-48'-polyubiquitination catalyzed by TTC3, leading to its degradation by the proteasome. Ubiquitinated via 'Lys-48'-linked polyubiquitination by ZNRF1, leading to its degradation by the proteasome. Also ubiquitinated by TRIM13 leading to its proteasomal degradation. Phosphorylated, undergoes 'Lys-48'-linked polyubiquitination preferentially at Lys-284 catalyzed by MUL1, leading to its proteasomal degradation. Post-translationally, acetylated on Lys-14 and Lys-20 by the histone acetyltransferases EP300 and KAT2B. Acetylation results in reduced phosphorylation and inhibition of activity. Deacetylated at Lys-14 and Lys-20 by SIRT1. SIRT1-mediated deacetylation relieves the inhibition. Cleavage by caspase-3/CASP3. Cleaved at the caspase-3 consensus site Asp-462 during apoptosis, resulting in down-regulation of the AKT signaling pathway and decreased cell survival.

Its subcellular location is the cytoplasm. It is found in the nucleus. It localises to the cell membrane. The protein localises to the mitochondrion intermembrane space. The enzyme catalyses L-seryl-[protein] + ATP = O-phospho-L-seryl-[protein] + ADP + H(+). It catalyses the reaction L-threonyl-[protein] + ATP = O-phospho-L-threonyl-[protein] + ADP + H(+). Functionally, AKT1 is one of 3 closely related serine/threonine-protein kinases (AKT1, AKT2 and AKT3) called the AKT kinase, and which regulate many processes including metabolism, proliferation, cell survival, growth and angiogenesis. This is mediated through serine and/or threonine phosphorylation of a range of downstream substrates. Over 100 substrate candidates have been reported so far, but for most of them, no isoform specificity has been reported. AKT is responsible of the regulation of glucose uptake by mediating insulin-induced translocation of the SLC2A4/GLUT4 glucose transporter to the cell surface. Phosphorylation of PTPN1 at 'Ser-50' negatively modulates its phosphatase activity preventing dephosphorylation of the insulin receptor and the attenuation of insulin signaling. Phosphorylation of TBC1D4 triggers the binding of this effector to inhibitory 14-3-3 proteins, which is required for insulin-stimulated glucose transport. AKT also regulates the storage of glucose in the form of glycogen by phosphorylating GSK3A at 'Ser-21' and GSK3B at 'Ser-9', resulting in inhibition of its kinase activity. Phosphorylation of GSK3 isoforms by AKT is also thought to be one mechanism by which cell proliferation is driven. AKT also regulates cell survival via the phosphorylation of MAP3K5 (apoptosis signal-related kinase). Phosphorylation of 'Ser-83' decreases MAP3K5 kinase activity stimulated by oxidative stress and thereby prevents apoptosis. AKT mediates insulin-stimulated protein synthesis by phosphorylating TSC2 at 'Ser-939' and 'Thr-1462', thereby activating the mTORC1 signaling pathway, and leading to both phosphorylation of 4E-BP1 and in activation of RPS6KB1. Also regulates the mTORC1 signaling pathway by catalyzing phosphorylation of CASTOR1 and DEPDC5. AKT plays a role as key modulator of the AKT-mTOR signaling pathway controlling the tempo of the process of newborn neurons integration during adult neurogenesis, including correct neuron positioning, dendritic development and synapse formation. Part of a positive feedback loop of mTORC2 signaling by mediating phosphorylation of MAPKAP1/SIN1, promoting mTORC2 activation. AKT is involved in the phosphorylation of members of the FOXO factors (Forkhead family of transcription factors), leading to binding of 14-3-3 proteins and cytoplasmic localization. In particular, FOXO1 is phosphorylated at 'Thr-24', 'Ser-256' and 'Ser-319'. FOXO3 and FOXO4 are phosphorylated on equivalent sites. AKT has an important role in the regulation of NF-kappa-B-dependent gene transcription and positively regulates the activity of CREB1 (cyclic AMP (cAMP)-response element binding protein). The phosphorylation of CREB1 induces the binding of accessory proteins that are necessary for the transcription of pro-survival genes such as BCL2 and MCL1. AKT phosphorylates 'Ser-454' on ATP citrate lyase (ACLY), thereby potentially regulating ACLY activity and fatty acid synthesis. Activates the 3B isoform of cyclic nucleotide phosphodiesterase (PDE3B) via phosphorylation of 'Ser-273', resulting in reduced cyclic AMP levels and inhibition of lipolysis. Phosphorylates PIKFYVE on 'Ser-318', which results in increased PI(3)P-5 activity. The Rho GTPase-activating protein DLC1 is another substrate and its phosphorylation is implicated in the regulation cell proliferation and cell growth. Signals downstream of phosphatidylinositol 3-kinase (PI(3)K) to mediate the effects of various growth factors such as platelet-derived growth factor (PDGF), epidermal growth factor (EGF), insulin and insulin-like growth factor 1 (IGF1). AKT mediates the antiapoptotic effects of IGF1. Essential for the SPATA13-mediated regulation of cell migration and adhesion assembly and disassembly. May be involved in the regulation of the placental development. Phosphorylates STK4/MST1 at 'Thr-120' and 'Thr-387' leading to inhibition of its: kinase activity, nuclear translocation, autophosphorylation and ability to phosphorylate FOXO3. Phosphorylates STK3/MST2 at 'Thr-117' and 'Thr-384' leading to inhibition of its: cleavage, kinase activity, autophosphorylation at Thr-180, binding to RASSF1 and nuclear translocation. Phosphorylates SRPK2 and enhances its kinase activity towards SRSF2 and ACIN1 and promotes its nuclear translocation. Phosphorylates RAF1 at 'Ser-259' and negatively regulates its activity. Phosphorylation of BAD stimulates its pro-apoptotic activity. Phosphorylates KAT6A at 'Thr-369' and this phosphorylation inhibits the interaction of KAT6A with PML and negatively regulates its acetylation activity towards p53/TP53. Phosphorylates palladin (PALLD), modulating cytoskeletal organization and cell motility. Phosphorylates prohibitin (PHB), playing an important role in cell metabolism and proliferation. Phosphorylates CDKN1A, for which phosphorylation at 'Thr-145' induces its release from CDK2 and cytoplasmic relocalization. These recent findings indicate that the AKT1 isoform has a more specific role in cell motility and proliferation. Phosphorylates CLK2 thereby controlling cell survival to ionizing radiation. Phosphorylates PCK1 at 'Ser-90', reducing the binding affinity of PCK1 to oxaloacetate and changing PCK1 into an atypical protein kinase activity using GTP as donor. Also acts as an activator of TMEM175 potassium channel activity in response to growth factors: forms the lysoK(GF) complex together with TMEM175 and acts by promoting TMEM175 channel activation, independently of its protein kinase activity. Acts as a negative regulator of the cGAS-STING pathway by mediating phosphorylation of CGAS during mitosis, leading to its inhibition. Acts as a regulator of mitochondrial calcium uptake by mediating phosphorylation of MICU1 in the mitochondrial intermembrane space, impairing MICU1 maturation. Acts as an inhibitor of tRNA methylation by mediating phosphorylation of the N-terminus of METTL1, thereby inhibiting METTL1 methyltransferase activity. In response to LPAR1 receptor pathway activation, phosphorylates Rabin8/RAB3IP which alters its activity and phosphorylates WDR44 which induces WDR44 binding to Rab11, thereby switching Rab11 vesicular function from preciliary trafficking to endocytic recycling. The sequence is that of RAC-alpha serine/threonine-protein kinase (AKT1) from Bos taurus (Bovine).